The following is a 362-amino-acid chain: Probable dual-specificity RNA methyltransferase RlmN (362 aa).

Glutamate 105 acts as the Proton acceptor in catalysis. The region spanning 111-344 (HEYGNSICVT…VTIRREQGHD (234 aa)) is the Radical SAM core domain. Cysteines 118 and 349 form a disulfide. [4Fe-4S] cluster contacts are provided by cysteine 125, cysteine 129, and cysteine 132. Residues 175–176 (GE), serine 207, 230–232 (SLH), and asparagine 306 contribute to the S-adenosyl-L-methionine site. Residue cysteine 349 is the S-methylcysteine intermediate of the active site.

The protein belongs to the radical SAM superfamily. RlmN family. It depends on [4Fe-4S] cluster as a cofactor.

Its subcellular location is the cytoplasm. It carries out the reaction adenosine(2503) in 23S rRNA + 2 reduced [2Fe-2S]-[ferredoxin] + 2 S-adenosyl-L-methionine = 2-methyladenosine(2503) in 23S rRNA + 5'-deoxyadenosine + L-methionine + 2 oxidized [2Fe-2S]-[ferredoxin] + S-adenosyl-L-homocysteine. It catalyses the reaction adenosine(37) in tRNA + 2 reduced [2Fe-2S]-[ferredoxin] + 2 S-adenosyl-L-methionine = 2-methyladenosine(37) in tRNA + 5'-deoxyadenosine + L-methionine + 2 oxidized [2Fe-2S]-[ferredoxin] + S-adenosyl-L-homocysteine. Its function is as follows. Specifically methylates position 2 of adenine 2503 in 23S rRNA and position 2 of adenine 37 in tRNAs. This Bacillus anthracis (strain A0248) protein is Probable dual-specificity RNA methyltransferase RlmN.